The chain runs to 439 residues: Protein translocase subunit SecY (439 aa).

Transmembrane regions (helical) follow at residues 19 to 39, 68 to 88, 116 to 136, 151 to 171, 176 to 196, 216 to 236, 269 to 289, 312 to 332, 373 to 393, and 396 to 416; these read ILFT…TAPG, YSLF…VQLL, YITL…FQAM, LMIG…GEQI, FGSG…PSAI, WIFV…TTFV, VIPV…LQFL, WTGM…YSFV, VGSL…NVWG, and KIVA…IQAV.

It belongs to the SecY/SEC61-alpha family. As to quaternary structure, component of the Sec protein translocase complex. Heterotrimer consisting of SecY, SecE and SecG subunits. The heterotrimers can form oligomers, although 1 heterotrimer is thought to be able to translocate proteins. Interacts with the ribosome. Interacts with SecDF, and other proteins may be involved. Interacts with SecA.

Its subcellular location is the cell membrane. Its function is as follows. The central subunit of the protein translocation channel SecYEG. Consists of two halves formed by TMs 1-5 and 6-10. These two domains form a lateral gate at the front which open onto the bilayer between TMs 2 and 7, and are clamped together by SecE at the back. The channel is closed by both a pore ring composed of hydrophobic SecY resides and a short helix (helix 2A) on the extracellular side of the membrane which forms a plug. The plug probably moves laterally to allow the channel to open. The ring and the pore may move independently. This Lactococcus lactis subsp. cremoris (Streptococcus cremoris) protein is Protein translocase subunit SecY.